A 177-amino-acid chain; its full sequence is tRNA (cytidine(56)-2'-O)-methyltransferase (177 aa).

Residues Leu84 and 109-113 (GAEKV) each bind S-adenosyl-L-methionine.

It belongs to the aTrm56 family. Homodimer.

The protein localises to the cytoplasm. It catalyses the reaction cytidine(56) in tRNA + S-adenosyl-L-methionine = 2'-O-methylcytidine(56) in tRNA + S-adenosyl-L-homocysteine + H(+). Functionally, specifically catalyzes the AdoMet-dependent 2'-O-ribose methylation of cytidine at position 56 in tRNAs. The polypeptide is tRNA (cytidine(56)-2'-O)-methyltransferase (Methanosarcina acetivorans (strain ATCC 35395 / DSM 2834 / JCM 12185 / C2A)).